The chain runs to 197 residues: Protein jagunal (197 aa).

Residues 1-39 (MATRGGPMVAGTDGNDFEFRQRVAGTYQISLLNKSRLKY) lie on the Cytoplasmic side of the membrane. Residues 40 to 60 (CIFFHALLFFVMLAKLTSDIL) form a helical membrane-spanning segment. Topologically, residues 61–78 (DHLDIFVLEIEELEVPPP) are lumenal. The chain crosses the membrane as a helical span at residues 79–99 (LWWEYVWAASLLTSFLGLSAA). At 100 to 109 (RGNKVREMQK) the chain is on the cytoplasmic side. The helical transmembrane segment at 110-130 (YMVAILLFAILPLFYCFAYYF) threads the bilayer. Residues 131–159 (SDVWEFATLDKSVELDETDIFVWRGYPYG) lie on the Lumenal side of the membrane. The helical transmembrane segment at 160 to 180 (VFWYAFCFVGFQVHGFTLYFA) threads the bilayer. Over 181–197 (YNLVKAWKARTATRKFQ) the chain is Cytoplasmic.

The protein belongs to the jagunal family.

The protein resides in the endoplasmic reticulum membrane. Its function is as follows. Required for endoplasmic reticulum organization and proper vesicular traffic during vitellogenesis. Required for oocyte and bristle growth. The polypeptide is Protein jagunal (Drosophila melanogaster (Fruit fly)).